Reading from the N-terminus, the 56-residue chain is Large ribosomal subunit protein bL33 (56 aa).

The protein belongs to the bacterial ribosomal protein bL33 family.

This is Large ribosomal subunit protein bL33 from Aliarcobacter butzleri (strain RM4018) (Arcobacter butzleri).